The primary structure comprises 195 residues: Imidazoleglycerol-phosphate dehydratase (195 aa).

This sequence belongs to the imidazoleglycerol-phosphate dehydratase family.

Its subcellular location is the cytoplasm. It carries out the reaction D-erythro-1-(imidazol-4-yl)glycerol 3-phosphate = 3-(imidazol-4-yl)-2-oxopropyl phosphate + H2O. The protein operates within amino-acid biosynthesis; L-histidine biosynthesis; L-histidine from 5-phospho-alpha-D-ribose 1-diphosphate: step 6/9. This chain is Imidazoleglycerol-phosphate dehydratase, found in Ruegeria pomeroyi (strain ATCC 700808 / DSM 15171 / DSS-3) (Silicibacter pomeroyi).